Here is a 333-residue protein sequence, read N- to C-terminus: Phosphate acyltransferase (333 aa).

The protein belongs to the PlsX family. As to quaternary structure, homodimer. Probably interacts with PlsY.

It is found in the cytoplasm. The catalysed reaction is a fatty acyl-[ACP] + phosphate = an acyl phosphate + holo-[ACP]. It participates in lipid metabolism; phospholipid metabolism. Its function is as follows. Catalyzes the reversible formation of acyl-phosphate (acyl-PO(4)) from acyl-[acyl-carrier-protein] (acyl-ACP). This enzyme utilizes acyl-ACP as fatty acyl donor, but not acyl-CoA. In Bacillus subtilis (strain 168), this protein is Phosphate acyltransferase.